The following is a 490-amino-acid chain: Katanin p60 ATPase-containing subunit A-like 1 (490 aa).

Position 1 is an N-acetylmethionine (methionine 1). Residues 87-182 (SCQDEPVRDP…ASDGEIPKFD (96 aa)) are disordered. Positions 116-127 (SNREVRPLRKDM) are enriched in basic and acidic residues. Residues 128–139 (AGVGARGPVGRA) are compositionally biased toward low complexity. Positions 143–169 (SKSEKPSTSRDKDNRARGKDDKGRKNM) are enriched in basic and acidic residues. Serine 174 is modified (phosphoserine). 248 to 255 (GPPGTGKT) contacts ATP.

Belongs to the AAA ATPase family. Katanin p60 subunit A1 subfamily. A-like 1 sub-subfamily. Interacts with KATNB1 and KATNBL1.

Its subcellular location is the cytoplasm. It localises to the cytoskeleton. It is found in the spindle pole. The protein localises to the spindle. It carries out the reaction n ATP + n H2O + a microtubule = n ADP + n phosphate + (n+1) alpha/beta tubulin heterodimers.. In terms of biological role, regulates microtubule dynamics in Sertoli cells, a process that is essential for spermiogenesis and male fertility. Severs microtubules in an ATP-dependent manner, promoting rapid reorganization of cellular microtubule arrays. Has microtubule-severing activity in vitro. The protein is Katanin p60 ATPase-containing subunit A-like 1 of Otolemur garnettii (Small-eared galago).